A 435-amino-acid polypeptide reads, in one-letter code: Xylose isomerase (435 aa).

Residues His-100 and Asp-103 contribute to the active site. Mg(2+) contacts are provided by Glu-231, Glu-267, His-270, Asp-295, Asp-306, Asp-308, and Asp-338.

It belongs to the xylose isomerase family. In terms of assembly, homotetramer. Mg(2+) serves as cofactor.

It is found in the cytoplasm. It carries out the reaction alpha-D-xylose = alpha-D-xylulofuranose. The polypeptide is Xylose isomerase (Brucella anthropi (strain ATCC 49188 / DSM 6882 / CCUG 24695 / JCM 21032 / LMG 3331 / NBRC 15819 / NCTC 12168 / Alc 37) (Ochrobactrum anthropi)).